Here is a 497-residue protein sequence, read N- to C-terminus: 4,4'-diapolycopene oxygenase (497 aa).

The protein belongs to the carotenoid/retinoid oxidoreductase family. FAD serves as cofactor.

The enzyme catalyses all-trans-4,4'-diapolycopene + 4 AH2 + 4 O2 = all-trans-4,4'-diapolycopene-4,4'-dial + 4 A + 6 H2O. It carries out the reaction all-trans-4,4'-diaponeurosporene + 2 AH2 + 2 O2 = 4,4'-diaponeurosporenal + 2 A + 3 H2O. The protein operates within carotenoid biosynthesis. In terms of biological role, involved in the biosynthesis of C30 carotenoids. Catalyzes the oxidation of the terminal methyl side groups of 4,4'-diapolycopene to yield 4,4'-diapolycopen-4,4'-dial via the aldehyde intermediate 4,4'-diapolycopen-al. Also able to catalyze the oxidation of the terminal methyl side group of 4,4'-diaponeurosporene to form 4,4'-diaponeurosporen-4-al. It has moderate to low activity on the C40 substrates neurosporene and lycopene, and has no detectable activity on zeta-carotene or beta-carotene. This Methylomonas sp protein is 4,4'-diapolycopene oxygenase.